Here is a 647-residue protein sequence, read N- to C-terminus: Threonine--tRNA ligase (647 aa).

In terms of domain architecture, TGS spans 1–63; that stretch reads MYMIQLTFPD…EHDGKIELVM (63 aa). Residues 247-544 form a catalytic region; sequence DHRKLGKELD…LIEEYKGAFP (298 aa). 3 residues coordinate Zn(2+): C340, H391, and H521.

It belongs to the class-II aminoacyl-tRNA synthetase family. As to quaternary structure, homodimer. The cofactor is Zn(2+).

The protein localises to the cytoplasm. It carries out the reaction tRNA(Thr) + L-threonine + ATP = L-threonyl-tRNA(Thr) + AMP + diphosphate + H(+). Its function is as follows. Catalyzes the attachment of threonine to tRNA(Thr) in a two-step reaction: L-threonine is first activated by ATP to form Thr-AMP and then transferred to the acceptor end of tRNA(Thr). Also edits incorrectly charged L-seryl-tRNA(Thr). The protein is Threonine--tRNA ligase of Exiguobacterium sp. (strain ATCC BAA-1283 / AT1b).